The following is a 205-amino-acid chain: Protein-L-isoaspartate O-methyltransferase (205 aa).

The active site involves serine 56.

The protein belongs to the methyltransferase superfamily. L-isoaspartyl/D-aspartyl protein methyltransferase family.

It is found in the cytoplasm. It catalyses the reaction [protein]-L-isoaspartate + S-adenosyl-L-methionine = [protein]-L-isoaspartate alpha-methyl ester + S-adenosyl-L-homocysteine. Its function is as follows. Catalyzes the methyl esterification of L-isoaspartyl residues in peptides and proteins that result from spontaneous decomposition of normal L-aspartyl and L-asparaginyl residues. It plays a role in the repair and/or degradation of damaged proteins. This Pyrobaculum aerophilum (strain ATCC 51768 / DSM 7523 / JCM 9630 / CIP 104966 / NBRC 100827 / IM2) protein is Protein-L-isoaspartate O-methyltransferase.